We begin with the raw amino-acid sequence, 1588 residues long: Pentafunctional AROM polypeptide (1588 aa).

The interval 1–392 (MVQLAKVPIL…YGDSAQFVSD (392 aa)) is 3-dehydroquinate synthase. Residues 43–45 (DTN), 78–81 (ETSK), 109–111 (GGV), and Asp-114 contribute to the NAD(+) site. 7-phospho-2-dehydro-3-deoxy-D-arabino-heptonate is bound at residue Arg-125. Position 134 to 135 (134 to 135 (TS)) interacts with NAD(+). 7-phospho-2-dehydro-3-deoxy-D-arabino-heptonate-binding residues include Asp-141 and Lys-147. Lys-156 is an NAD(+) binding site. Residue Asn-157 participates in 7-phospho-2-dehydro-3-deoxy-D-arabino-heptonate binding. Residues 174 to 177 (WLET) and Asn-185 each bind NAD(+). Residue Glu-189 participates in Zn(2+) binding. Residues 189-192 (EVIK) and Lys-258 contribute to the 7-phospho-2-dehydro-3-deoxy-D-arabino-heptonate site. Catalysis depends on Glu-268, which acts as the Proton acceptor; for 3-dehydroquinate synthase activity. 7-phospho-2-dehydro-3-deoxy-D-arabino-heptonate contacts are provided by residues 272–276 (RNLLN) and His-279. His-279 contributes to the Zn(2+) binding site. His-283 acts as the Proton acceptor; for 3-dehydroquinate synthase activity in catalysis. 7-phospho-2-dehydro-3-deoxy-D-arabino-heptonate contacts are provided by His-295 and Lys-364. Zn(2+) is bound at residue His-295. Positions 405–871 (VYPFKDIPAD…WDVLHSELGA (467 aa)) are EPSP synthase. Cys-853 (for EPSP synthase activity) is an active-site residue. The shikimate kinase stretch occupies residues 890–1080 (SVVIIGMRAA…IPSGRSAFVC (191 aa)). ATP is bound at residue 895–902 (GMRAAGKT). Positions 1081 to 1293 (LTFDDLTEQT…AAPGQLTVAQ (213 aa)) are 3-dehydroquinase. The active-site Proton acceptor; for 3-dehydroquinate dehydratase activity is His-1198. Lys-1227 acts as the Schiff-base intermediate with substrate; for 3-dehydroquinate dehydratase activity in catalysis. The tract at residues 1306–1588 (PKELFVVGKP…KAIFDAVTKE (283 aa)) is shikimate dehydrogenase.

This sequence in the N-terminal section; belongs to the sugar phosphate cyclases superfamily. Dehydroquinate synthase family. In the 2nd section; belongs to the EPSP synthase family. It in the 3rd section; belongs to the shikimate kinase family. The protein in the 4th section; belongs to the type-I 3-dehydroquinase family. This sequence in the C-terminal section; belongs to the shikimate dehydrogenase family. In terms of assembly, homodimer. It depends on Zn(2+) as a cofactor.

The protein localises to the cytoplasm. The enzyme catalyses 7-phospho-2-dehydro-3-deoxy-D-arabino-heptonate = 3-dehydroquinate + phosphate. It carries out the reaction 3-dehydroquinate = 3-dehydroshikimate + H2O. It catalyses the reaction shikimate + NADP(+) = 3-dehydroshikimate + NADPH + H(+). The catalysed reaction is shikimate + ATP = 3-phosphoshikimate + ADP + H(+). The enzyme catalyses 3-phosphoshikimate + phosphoenolpyruvate = 5-O-(1-carboxyvinyl)-3-phosphoshikimate + phosphate. It participates in metabolic intermediate biosynthesis; chorismate biosynthesis; chorismate from D-erythrose 4-phosphate and phosphoenolpyruvate: step 2/7. The protein operates within metabolic intermediate biosynthesis; chorismate biosynthesis; chorismate from D-erythrose 4-phosphate and phosphoenolpyruvate: step 3/7. Its pathway is metabolic intermediate biosynthesis; chorismate biosynthesis; chorismate from D-erythrose 4-phosphate and phosphoenolpyruvate: step 4/7. It functions in the pathway metabolic intermediate biosynthesis; chorismate biosynthesis; chorismate from D-erythrose 4-phosphate and phosphoenolpyruvate: step 5/7. It participates in metabolic intermediate biosynthesis; chorismate biosynthesis; chorismate from D-erythrose 4-phosphate and phosphoenolpyruvate: step 6/7. Functionally, the AROM polypeptide catalyzes 5 consecutive enzymatic reactions in prechorismate polyaromatic amino acid biosynthesis. The sequence is that of Pentafunctional AROM polypeptide from Saccharomyces cerevisiae (strain JAY291) (Baker's yeast).